Reading from the N-terminus, the 261-residue chain is Proteasome subunit alpha type-4 (261 aa).

Phosphoserine occurs at positions 13 and 75. K127 carries the post-translational modification N6-acetyllysine. S173 is modified (phosphoserine). An N6-acetyllysine modification is found at K176. The tract at residues 240-261 is disordered; it reads HEEEEAKAEREKKEKEQREKDK.

It belongs to the peptidase T1A family. The 26S proteasome consists of a 20S proteasome core and two 19S regulatory subunits. The 20S proteasome core is a barrel-shaped complex made of 28 subunits that are arranged in four stacked rings. The two outer rings are each formed by seven alpha subunits, and the two inner rings are formed by seven beta subunits. The proteolytic activity is exerted by three beta-subunits PSMB5, PSMB6 and PSMB7. As to expression, ubiquitous.

It localises to the cytoplasm. The protein resides in the nucleus. Its function is as follows. Component of the 20S core proteasome complex involved in the proteolytic degradation of most intracellular proteins. This complex plays numerous essential roles within the cell by associating with different regulatory particles. Associated with two 19S regulatory particles, forms the 26S proteasome and thus participates in the ATP-dependent degradation of ubiquitinated proteins. The 26S proteasome plays a key role in the maintenance of protein homeostasis by removing misfolded or damaged proteins that could impair cellular functions, and by removing proteins whose functions are no longer required. Associated with the PA200 or PA28, the 20S proteasome mediates ubiquitin-independent protein degradation. This type of proteolysis is required in several pathways including spermatogenesis (20S-PA200 complex) or generation of a subset of MHC class I-presented antigenic peptides (20S-PA28 complex). The sequence is that of Proteasome subunit alpha type-4 (Psma4) from Rattus norvegicus (Rat).